The following is a 318-amino-acid chain: dTDP-6-deoxy-L-talose 4-dehydrogenase (NAD(P)(+)) (318 aa).

Residues 19–20 (FI), 60–61 (DP), Asn-95, Thr-120, Tyr-145, and Lys-149 contribute to the NAD(+) site. 2 residues coordinate substrate: Thr-120 and Tyr-145. Tyr-145 serves as the catalytic Proton acceptor.

This sequence belongs to the NAD(P)-dependent epimerase/dehydratase family.

It catalyses the reaction dTDP-6-deoxy-beta-L-talose + NAD(+) = dTDP-4-dehydro-beta-L-rhamnose + NADH + H(+). The enzyme catalyses dTDP-6-deoxy-beta-L-talose + NADP(+) = dTDP-4-dehydro-beta-L-rhamnose + NADPH + H(+). Functionally, catalyzes the reduction of dTDP-6-deoxy-L-lyxo-4-hexulose to dTDP-6-deoxy-L-talose. Can use NAD(+) or NADP(+). The chain is dTDP-6-deoxy-L-talose 4-dehydrogenase (NAD(P)(+)) (tal) from Kitasatospora kifunensis (Streptomyces kifunensis).